A 67-amino-acid polypeptide reads, in one-letter code: Phycobilisome 7.8 kDa linker polypeptide, allophycocyanin-associated, core (67 aa).

In terms of domain architecture, CpcD-like spans 1–56; sequence MRMFKITACVPSQTRIRTQRELQNTYFTKLVPYENWFREQQRIQKMGGKIVKVELF.

It belongs to the phycobilisome linker protein family.

It is found in the cellular thylakoid membrane. Functionally, rod linker protein, associated with allophycocyanin. Linker polypeptides determine the state of aggregation and the location of the disk-shaped phycobiliprotein units within the phycobilisome and modulate their spectroscopic properties in order to mediate a directed and optimal energy transfer. This is Phycobilisome 7.8 kDa linker polypeptide, allophycocyanin-associated, core (apcC) from Thermosynechococcus vestitus (strain NIES-2133 / IAM M-273 / BP-1).